The sequence spans 275 residues: 2,3,4,5-tetrahydropyridine-2,6-dicarboxylate N-succinyltransferase (275 aa).

Positions 105 and 142 each coordinate substrate.

It belongs to the transferase hexapeptide repeat family. In terms of assembly, homotrimer.

The protein resides in the cytoplasm. It catalyses the reaction (S)-2,3,4,5-tetrahydrodipicolinate + succinyl-CoA + H2O = (S)-2-succinylamino-6-oxoheptanedioate + CoA. The protein operates within amino-acid biosynthesis; L-lysine biosynthesis via DAP pathway; LL-2,6-diaminopimelate from (S)-tetrahydrodipicolinate (succinylase route): step 1/3. This chain is 2,3,4,5-tetrahydropyridine-2,6-dicarboxylate N-succinyltransferase, found in Pectobacterium atrosepticum (strain SCRI 1043 / ATCC BAA-672) (Erwinia carotovora subsp. atroseptica).